We begin with the raw amino-acid sequence, 137 residues long: uncharacterized protein (137 aa).

The N-terminal stretch at 1-34 is a signal peptide; that stretch reads MAALSRALGPLRTPAPPLWIGLFLVATGSQQSLA. Positions 33 to 45 are enriched in polar residues; that stretch reads LAQPLPGNTTEAT. Disordered regions lie at residues 33-54 and 98-137; these read LAQP…ASGS and VLSP…LGAS. The N-linked (GlcNAc...) asparagine glycan is linked to asparagine 40. Residues 121–137 are compositionally biased toward basic and acidic residues; the sequence is KLKEPQPQDHKPGLGAS.

It localises to the secreted. This is an uncharacterized protein from Homo sapiens (Human).